The primary structure comprises 460 residues: Diguanylate cyclase DosC (460 aa).

Heme is bound at residue His98. One can recognise a GGDEF domain in the interval 325–458; the sequence is TPLSVLIIDV…GRNRVELWKA (134 aa). A Mg(2+)-binding site is contributed by Asp333. 2 residues coordinate substrate: Asn341 and Asp350. Asp376 is a binding site for Mg(2+). Asp376 serves as the catalytic Proton acceptor.

It depends on heme as a cofactor. The cofactor is Mg(2+).

It catalyses the reaction 2 GTP = 3',3'-c-di-GMP + 2 diphosphate. It participates in purine metabolism; 3',5'-cyclic di-GMP biosynthesis. In terms of biological role, globin-coupled heme-based oxygen sensor protein displaying diguanylate cyclase (DGC) activity in response to oxygen availability. Thus, catalyzes the synthesis of cyclic diguanylate (c-di-GMP) via the condensation of 2 GTP molecules. Cyclic-di-GMP is a second messenger which controls cell surface-associated traits in bacteria. The sequence is that of Diguanylate cyclase DosC (dosC) from Shigella sonnei (strain Ss046).